The primary structure comprises 216 residues: 3-isopropylmalate dehydratase small subunit (216 aa).

This sequence belongs to the LeuD family. LeuD type 1 subfamily. As to quaternary structure, heterodimer of LeuC and LeuD.

The enzyme catalyses (2R,3S)-3-isopropylmalate = (2S)-2-isopropylmalate. The protein operates within amino-acid biosynthesis; L-leucine biosynthesis; L-leucine from 3-methyl-2-oxobutanoate: step 2/4. Catalyzes the isomerization between 2-isopropylmalate and 3-isopropylmalate, via the formation of 2-isopropylmaleate. The chain is 3-isopropylmalate dehydratase small subunit from Bordetella avium (strain 197N).